The chain runs to 258 residues: Acetylglutamate kinase (258 aa).

Residues 41–42 (GG), R63, and N156 each bind substrate.

Belongs to the acetylglutamate kinase family. ArgB subfamily.

The protein resides in the cytoplasm. It carries out the reaction N-acetyl-L-glutamate + ATP = N-acetyl-L-glutamyl 5-phosphate + ADP. Its pathway is amino-acid biosynthesis; L-arginine biosynthesis; N(2)-acetyl-L-ornithine from L-glutamate: step 2/4. Functionally, catalyzes the ATP-dependent phosphorylation of N-acetyl-L-glutamate. In Bacillus amyloliquefaciens (Bacillus velezensis), this protein is Acetylglutamate kinase.